The following is an 89-amino-acid chain: uncharacterized protein (89 aa).

This is an uncharacterized protein from Treponema pallidum (strain Nichols).